The primary structure comprises 1301 residues: DNA-directed RNA polymerase subunit beta (1301 aa).

Belongs to the RNA polymerase beta chain family. In plastids the minimal PEP RNA polymerase catalytic core is composed of four subunits: alpha, beta, beta', and beta''. When a (nuclear-encoded) sigma factor is associated with the core the holoenzyme is formed, which can initiate transcription.

The protein localises to the plastid. It localises to the chloroplast. The enzyme catalyses RNA(n) + a ribonucleoside 5'-triphosphate = RNA(n+1) + diphosphate. DNA-dependent RNA polymerase catalyzes the transcription of DNA into RNA using the four ribonucleoside triphosphates as substrates. The chain is DNA-directed RNA polymerase subunit beta from Chlorella vulgaris (Green alga).